The following is a 363-amino-acid chain: Protein-arginine kinase (363 aa).

The Phosphagen kinase C-terminal domain occupies 24–255; that stretch reads IVLSSRIRLA…EQLIAQERAA (232 aa). ATP contacts are provided by residues 27 to 31, His92, Arg126, 177 to 181, and 208 to 213; these read SSRIR, RASVM, and RGTYGE. The short motif at 338-343 is the RDXXRA motif of the pArg binding pocket involved in allosteric regulation element; that stretch reads RDVRRA.

This sequence belongs to the ATP:guanido phosphotransferase family. In terms of assembly, homodimer. Dimerization is important for full catalytic activity.

The catalysed reaction is L-arginyl-[protein] + ATP = N(omega)-phospho-L-arginyl-[protein] + ADP + H(+). With respect to regulation, appears to be allosterically activated by the binding of pArg-containing polypeptides to the pArg-binding pocket localized in the C-terminal domain of McsB. In terms of biological role, catalyzes the specific phosphorylation of arginine residues in a large number of proteins. Is part of the bacterial stress response system, where it is involved in regulating the global heat shock repressor CtsR; phosphorylates arginine residues in the winged helix-turn-helix domain of CtsR, thereby preventing its binding to DNA and consequently inducing the expression of repressed genes. Protein arginine phosphorylation has a physiologically important role and is involved in the regulation of many critical cellular processes, such as protein homeostasis, motility, competence, and stringent and stress responses, by regulating gene expression and protein activity. Acts exclusively on Arg residues, since it cannot phosphorylate Tyr, Ser, Thr, His, Asp and Lys. Has no free arginine kinase activity. This chain is Protein-arginine kinase, found in Geobacillus stearothermophilus (Bacillus stearothermophilus).